A 159-amino-acid chain; its full sequence is MAKDEVVDRVTALAESLLSSQEMELVDIEYKREGRHMVLRLFVDKAGGITLDDCALVSREFSEILDVEDFISENYTLEVSSPGLNRPLKRESDYERYRGRLVKVRTYDVVEDEAGNRRKTFLGDLEGLAGGVVTLKLREGQMARIPLAKIAKANLEFEF.

Belongs to the RimP family.

Its subcellular location is the cytoplasm. Its function is as follows. Required for maturation of 30S ribosomal subunits. The protein is Ribosome maturation factor RimP of Geobacter metallireducens (strain ATCC 53774 / DSM 7210 / GS-15).